The sequence spans 107 residues: Subtilisin inhibitor-like protein 3 (107 aa).

Cystine bridges form between cysteine 29–cysteine 44 and cysteine 65–cysteine 95.

It belongs to the protease inhibitor I16 (SSI) family. As to quaternary structure, homodimer.

The protein resides in the secreted. Functionally, inhibitor of subtilisin BPN' and trypsin. In Streptomyces coelicolor, this protein is Subtilisin inhibitor-like protein 3.